Consider the following 186-residue polypeptide: Ribosome-recycling factor (186 aa).

This sequence belongs to the RRF family.

It is found in the cytoplasm. Functionally, responsible for the release of ribosomes from messenger RNA at the termination of protein biosynthesis. May increase the efficiency of translation by recycling ribosomes from one round of translation to another. The sequence is that of Ribosome-recycling factor from Rickettsia akari (strain Hartford).